The chain runs to 537 residues: Pentatricopeptide repeat-containing protein At1g02370, mitochondrial (537 aa).

Residues M1–C18 constitute a mitochondrion transit peptide. 7 PPR repeats span residues H171–N205, N206–P240, C241–K275, T277–K307, N312–V346, N347–K377, and D382–P416.

It belongs to the PPR family. P subfamily.

The protein localises to the mitochondrion. The protein is Pentatricopeptide repeat-containing protein At1g02370, mitochondrial of Arabidopsis thaliana (Mouse-ear cress).